The following is a 324-amino-acid chain: Glutathione synthetase (324 aa).

Residues E125–E312 form the ATP-grasp domain. Residue F152–G209 participates in ATP binding. E283 and N285 together coordinate Mg(2+).

Belongs to the prokaryotic GSH synthase family. It depends on Mg(2+) as a cofactor. Mn(2+) serves as cofactor.

The catalysed reaction is gamma-L-glutamyl-L-cysteine + glycine + ATP = glutathione + ADP + phosphate + H(+). Its pathway is sulfur metabolism; glutathione biosynthesis; glutathione from L-cysteine and L-glutamate: step 2/2. This chain is Glutathione synthetase, found in Buchnera aphidicola subsp. Baizongia pistaciae (strain Bp).